Consider the following 251-residue polypeptide: 3-deoxy-manno-octulosonate cytidylyltransferase (251 aa).

Belongs to the KdsB family.

The protein localises to the cytoplasm. The catalysed reaction is 3-deoxy-alpha-D-manno-oct-2-ulosonate + CTP = CMP-3-deoxy-beta-D-manno-octulosonate + diphosphate. Its pathway is nucleotide-sugar biosynthesis; CMP-3-deoxy-D-manno-octulosonate biosynthesis; CMP-3-deoxy-D-manno-octulosonate from 3-deoxy-D-manno-octulosonate and CTP: step 1/1. It participates in bacterial outer membrane biogenesis; lipopolysaccharide biosynthesis. Functionally, activates KDO (a required 8-carbon sugar) for incorporation into bacterial lipopolysaccharide in Gram-negative bacteria. This chain is 3-deoxy-manno-octulosonate cytidylyltransferase, found in Chromobacterium violaceum (strain ATCC 12472 / DSM 30191 / JCM 1249 / CCUG 213 / NBRC 12614 / NCIMB 9131 / NCTC 9757 / MK).